A 1259-amino-acid polypeptide reads, in one-letter code: Receptor tyrosine-protein kinase erbB-2 (1259 aa).

An N-terminal signal peptide occupies residues Met-1–Gly-22. At Thr-23–Ile-653 the chain is on the extracellular side. An intrachain disulfide couples Cys-26 to Cys-53. N-linked (GlcNAc...) asparagine glycosylation occurs at Asn-68. Intrachain disulfides connect Cys-162–Cys-192, Cys-195–Cys-204, Cys-199–Cys-212, Cys-220–Cys-227, Cys-224–Cys-235, Cys-236–Cys-244, Cys-240–Cys-252, Cys-255–Cys-264, Cys-268–Cys-295, Cys-299–Cys-311, Cys-315–Cys-331, Cys-334–Cys-338, and Cys-342–Cys-367. Thr-182 bears the Phosphothreonine mark. Asn-259 carries an N-linked (GlcNAc...) asparagine glycan. Asn-421 carries N-linked (GlcNAc...) asparagine glycosylation. Disulfide bonds link Cys-475-Cys-504, Cys-511-Cys-519, and Cys-514-Cys-527. The N-linked (GlcNAc...) asparagine glycan is linked to Asn-529. Cystine bridges form between Cys-530-Cys-539, Cys-543-Cys-559, Cys-562-Cys-575, Cys-566-Cys-583, Cys-586-Cys-595, Cys-599-Cys-622, Cys-625-Cys-633, and Cys-629-Cys-641. Asn-570 carries N-linked (GlcNAc...) asparagine glycosylation. N-linked (GlcNAc...) asparagine glycosylation occurs at Asn-628. A helical membrane pass occupies residues Ile-654–Ile-674. A required for interaction with KPNB1 and EEA1 region spans residues Lys-675–Arg-688. A Nuclear localization signal motif is present at residues Lys-675–Arg-688. At Lys-675–Val-1259 the chain is on the cytoplasmic side. The 268-residue stretch at Leu-719–Val-986 folds into the Protein kinase domain. ATP is bound by residues Leu-725–Val-733 and Lys-752. The Proton acceptor role is filled by Asp-844. Tyr-876 is modified (phosphotyrosine). The disordered stretch occupies residues Gln-1027–Gly-1183. Phosphoserine is present on residues Ser-1077, Ser-1082, and Ser-1106. The residue at position 1111 (Tyr-1111) is a Phosphotyrosine. Tyr-1138 is subject to Phosphotyrosine; by autocatalysis. The segment covering Trp-1145–Arg-1160 has biased composition (pro residues). Thr-1165 carries the phosphothreonine modification. Residues Glu-1199–Leu-1201 are interaction with PIK3C2B. Tyr-1200 bears the Phosphotyrosine mark. Residues Pro-1203–Val-1259 are disordered. The span at Pro-1237–Ala-1247 shows a compositional bias: polar residues. Phosphotyrosine; by autocatalysis is present on Tyr-1252.

This sequence belongs to the protein kinase superfamily. Tyr protein kinase family. EGF receptor subfamily. In terms of assembly, homodimer. Heterodimer with EGFR, ERBB3 and ERBB4. Part of a complex with EGFR and either PIK3C2A or PIK3C2B. May interact with PIK3C2B when phosphorylated on Tyr-1200. Interacts with PRKCABP and PLXNB1. Interacts (when phosphorylated on Tyr-1252) with MEMO1. Interacts with MUC1. Interacts (when phosphorylated on Tyr-1138) with GRB7 (via SH2 domain). Interacts (when phosphorylated on Tyr-1252) with ERBIN. Interacts with SRC, KPNB1, PTK6, RANBP2, EEA1, CRM1, CLTC, RPA194, MYOC and ACTB. Interacts (preferentially with the tyrosine phosphorylated form) with CPNE3; this interaction occurs at the cell membrane and is increased in a growth factor heregulin-dependent manner. Interacts with HSP90AA1 and HSP90AB1 in an ATP-dependent manner; the interaction suppresses ERBB2 kinase activity. Interacts with SORL1; this interaction regulates ERBB2 subcellular distribution by promoting its recycling after internalization from endosomes back to the plasma membrane, hence stimulates ERBB2-mediated signaling. Interacts with SH3BGRL. Interacts with ROR1. Post-translationally, autophosphorylated. Autophosphorylation occurs in trans, i.e. one subunit of the dimeric receptor phosphorylates tyrosine residues on the other subunit. Ligand-binding increases phosphorylation on tyrosine residues. Signaling via SEMA4C promotes phosphorylation at Tyr-1252. Dephosphorylated by PTPN12.

It localises to the cell membrane. The protein localises to the cell projection. The protein resides in the ruffle membrane. Its subcellular location is the early endosome. It is found in the cytoplasm. It localises to the perinuclear region. The protein localises to the nucleus. It catalyses the reaction L-tyrosyl-[protein] + ATP = O-phospho-L-tyrosyl-[protein] + ADP + H(+). Protein tyrosine kinase that is part of several cell surface receptor complexes, but that apparently needs a coreceptor for ligand binding. Essential component of a neuregulin-receptor complex, although neuregulins do not interact with it alone. GP30 is a potential ligand for this receptor. Regulates outgrowth and stabilization of peripheral microtubules (MTs). Upon ERBB2 activation, the MEMO1-RHOA-DIAPH1 signaling pathway elicits the phosphorylation and thus the inhibition of GSK3B at cell membrane. This prevents the phosphorylation of APC and CLASP2, allowing its association with the cell membrane. In turn, membrane-bound APC allows the localization of MACF1 to the cell membrane, which is required for microtubule capture and stabilization. In terms of biological role, in the nucleus is involved in transcriptional regulation. Associates with the 5'-TCAAATTC-3' sequence in the PTGS2/COX-2 promoter and activates its transcription. Implicated in transcriptional activation of CDKN1A; the function involves STAT3 and SRC. Involved in the transcription of rRNA genes by RNA Pol I and enhances protein synthesis and cell growth. This chain is Receptor tyrosine-protein kinase erbB-2 (ERBB2), found in Canis lupus familiaris (Dog).